We begin with the raw amino-acid sequence, 596 residues long: Proline--tRNA ligase (596 aa).

Belongs to the class-II aminoacyl-tRNA synthetase family. ProS type 1 subfamily. As to quaternary structure, homodimer.

It localises to the cytoplasm. The enzyme catalyses tRNA(Pro) + L-proline + ATP = L-prolyl-tRNA(Pro) + AMP + diphosphate. Functionally, catalyzes the attachment of proline to tRNA(Pro) in a two-step reaction: proline is first activated by ATP to form Pro-AMP and then transferred to the acceptor end of tRNA(Pro). As ProRS can inadvertently accommodate and process non-cognate amino acids such as alanine and cysteine, to avoid such errors it has two additional distinct editing activities against alanine. One activity is designated as 'pretransfer' editing and involves the tRNA(Pro)-independent hydrolysis of activated Ala-AMP. The other activity is designated 'posttransfer' editing and involves deacylation of mischarged Ala-tRNA(Pro). The misacylated Cys-tRNA(Pro) is not edited by ProRS. The protein is Proline--tRNA ligase of Prochlorococcus marinus (strain NATL1A).